We begin with the raw amino-acid sequence, 348 residues long: Mannonate dehydratase (348 aa).

The protein belongs to the mannonate dehydratase family. It depends on Fe(2+) as a cofactor. Mn(2+) is required as a cofactor.

The catalysed reaction is D-mannonate = 2-dehydro-3-deoxy-D-gluconate + H2O. It participates in carbohydrate metabolism; pentose and glucuronate interconversion. In terms of biological role, catalyzes the dehydration of D-mannonate. This Streptococcus agalactiae serotype Ia (strain ATCC 27591 / A909 / CDC SS700) protein is Mannonate dehydratase.